The chain runs to 201 residues: MEKRDKGSSPMATMMGSRDENEDVENTTRTAETMLRLVPMALCVSALVVMLKNTQTNDYGSLSYSDLGAFRYLVHVNGICAGYSLLSAVIVAMPRASTMPRAWAFFLLDQVLTYVILAAGTVSTEVLYLASKGDTTITWSEACVSFGGFCHKALISIVITFVVVICYAALSLLSSYKLFSKYDSPVLTYPGKGIEIATFHG.

The interval Met1 to Thr27 is disordered. Over Met1–Thr30 the chain is Cytoplasmic. The helical transmembrane segment at Ala31–Leu51 threads the bilayer. Topologically, residues Lys52–Tyr72 are extracellular. The chain crosses the membrane as a helical span at residues Leu73–Met93. Residues Pro94–Arg101 are Cytoplasmic-facing. Residues Ala102–Val122 traverse the membrane as a helical segment. At Ser123–Lys152 the chain is on the extracellular side. A helical membrane pass occupies residues Ala153–Leu173. Residues Ser174–Gly201 lie on the Cytoplasmic side of the membrane.

It belongs to the Casparian strip membrane proteins (CASP) family. Homodimer and heterodimers.

The protein localises to the cell membrane. The sequence is that of CASP-like protein 2A1 from Populus trichocarpa (Western balsam poplar).